Here is a 559-residue protein sequence, read N- to C-terminus: MASAKKAVLGPLVGAVDQGTSSTRFLVFNSKTAELLSHHQVEIKQEFPREGWVEQDPKEILQSVYECIEKTCEKLGQLNIDISNIKAIGVSNQRETTVVWDKLTGEPLYNAVVWLDLRTQSTVESLSKRIPGNNNFVKSKTGLPLSTYFSAVKLRWLLDNVRKVQKAVEEDRALFGTIDSWLIWSLTGGASGGVHCTDVTNASRTMLFNIHSLEWDKELCEFFEIPMKILPNVRSSSEIYGLMKISHSPKAGALEGVPISGCLGDQSAALVGQMCFQDGQAKNTYGTGCFLLCNTGRKCVFSEHGLLTTVAYKLGRDKPVYYALEGSVAIAGAVIRWLRDNLGIIKSSEEIEKLAKEVGTSYGCYFVPAFSGLYAPYWEPSARGIICGLTQFTNKCHIAFAALEAVCFQTREILDAMNRDCGIPLSHLQVDGGMTNNKILMQLQADILYIPVVKPSMPETTALGAAMAAGAAEGVGVWSLEPEDLSAVTMERFEPQINAEESEIRYSTWKKAVMKSMGWVTTQSSESGDPSIFCSLPLGFFIVSSVVMLIGARYLSGMP.

Position 20 (Thr-20) interacts with ADP. ATP is bound by residues Thr-20, Ser-21, and Ser-22. Thr-20 contributes to the sn-glycerol 3-phosphate binding site. Residue Arg-24 participates in ADP binding. Sn-glycerol 3-phosphate contacts are provided by Arg-94, Glu-95, and Tyr-148. Arg-94, Glu-95, and Tyr-148 together coordinate glycerol. Gly-252 lines the beta-D-fructose 1,6-bisphosphate pocket. Asp-265 is a sn-glycerol 3-phosphate binding site. Residues Asp-265 and Gln-266 each contribute to the glycerol site. Thr-287, Gly-332, Gly-433, and Asn-437 together coordinate ADP. Residues Thr-287, Gly-332, and Gly-433 each contribute to the ATP site. Glu-501 is a Zn(2+) binding site. The chain crosses the membrane as a helical span at residues 532 to 552; sequence IFCSLPLGFFIVSSVVMLIGA.

This sequence belongs to the FGGY kinase family.

The protein resides in the mitochondrion outer membrane. It localises to the nucleus. Its subcellular location is the cytoplasm. The protein localises to the cytosol. It catalyses the reaction glycerol + ATP = sn-glycerol 3-phosphate + ADP + H(+). It participates in polyol metabolism; glycerol degradation via glycerol kinase pathway; sn-glycerol 3-phosphate from glycerol: step 1/1. Kinase that plays a key role in glycerol metabolism, catalyzing its phosphorylation to produce sn-glycerol 3-phosphate. Sn-glycerol 3-phosphate is a crucial intermediate in various metabolic pathways, such as the synthesis of glycerolipids and triglycerides, glycogenesis, glycolysis and gluconeogenesis. In Bos taurus (Bovine), this protein is Glycerol kinase.